An 862-amino-acid polypeptide reads, in one-letter code: Protein SEY1 (862 aa).

Residues 1–747 are Cytoplasmic-facing; sequence MVSNGHFASA…KRSAIGGMTQ (747 aa). The 258-residue stretch at 49–306 folds into the GB1/RHD3-type G domain; it reads GFNYHLISVF…IPADGFAVYA (258 aa). 59 to 66 contacts GTP; the sequence is GSQSTGKS. A coiled-coil region spans residues 481–507; that stretch reads SNYTQELALYQKDLEKISAQLRKDEMR. The helical transmembrane segment at 748–768 threads the bilayer; the sequence is IPVYFYILLLALGWNEIVAVL. Residues 769–771 lie on the Lumenal side of the membrane; sequence RNP. The helical transmembrane segment at 772–792 threads the bilayer; sequence LYFFMLFLCAVGAFVTYQLNL. Residues 793-862 lie on the Cytoplasmic side of the membrane; sequence WGPMIKMAEA…DDDDEDEGSW (70 aa). Residues 819–862 are disordered; that stretch reads LEPSEAGPHAARYKNSTEEYEMSNVKAPQRTNSGDDDDEDEGSW. Over residues 852-862 the composition is skewed to acidic residues; sequence GDDDDEDEGSW.

Belongs to the TRAFAC class dynamin-like GTPase superfamily. GB1/RHD3 GTPase family. RHD3 subfamily.

The protein localises to the endoplasmic reticulum membrane. In terms of biological role, cooperates with the reticulon proteins and tubule-shaping DP1 family proteins to generate and maintain the structure of the tubular endoplasmic reticulum network. Has GTPase activity, which is required for its function in ER organization. The sequence is that of Protein SEY1 from Uncinocarpus reesii (strain UAMH 1704).